We begin with the raw amino-acid sequence, 432 residues long: Transcriptional adapter 3 (432 aa).

K21 is covalently cross-linked (Glycyl lysine isopeptide (Lys-Gly) (interchain with G-Cter in SUMO2)). A coiled-coil region spans residues 40–69; sequence IEELDTLQLELETLLSSASRRLRVLEAETQ. A disordered region spans residues 87-127; it reads GRDHELGAPPKHGKPKKQKLEGKAGHGPGPGPGRPKSKNLQ. K129 participates in a covalent cross-link: Glycyl lysine isopeptide (Lys-Gly) (interchain with G-Cter in SUMO2). Composition is skewed to basic and acidic residues over residues 211–223 and 232–251; these read DGAR…DKKK and LDTK…HEQP. Disordered regions lie at residues 211–257 and 271–319; these read DGAR…GCPF and ENII…SRIK. A phosphoserine mark is found at S280 and S298. Over residues 295 to 305 the composition is skewed to polar residues; the sequence is ASTSPRNQNKP. A coiled-coil region spans residues 367–407; that stretch reads LLRLAKEEVSRQELRQRVRMADNEVMDAFRKIMAARQKKRT. K418 carries the post-translational modification N6-acetyllysine.

The protein belongs to the NGG1 family. The PCAF complex is composed of a number of TBP-associated factors (TAFS), such as TAF5, TAF5L, TAF6, TAF6L, TAF9, TAF10 and TAF12, PCAF, and also PCAF-associated factors (PAFs), such as TADA2L/ADA2, TADA3L/ADA3 and SPT3. Interacts directly with TADA2L and PCAF and also with the high-risk HPV oncoprotein E6. Component of the STAGA transcription coactivator-HAT complex, at least composed of SUPT3H, GCN5L2, TAF5L, TAF6L, SUPT7L, TADA3L, TAD1L, TAF10, TAF12, TRRAP and TAF9. Component of the TFTC-HAT complex. Component of the ADA2A-containing complex (ATAC), composed of KAT14, KAT2A, TADA2L, TADA3L, ZZ3, MBIP, WDR5, YEATS2, CCDC101 and DR1.

It localises to the nucleus. Functions as a component of the PCAF complex. The PCAF complex is capable of efficiently acetylating histones in a nucleosomal context. The PCAF complex could be considered as the human version of the yeast SAGA complex. Also known as a coactivator for p53/TP53-dependent transcriptional activation. Component of the ATAC complex, a complex with histone acetyltransferase activity on histones H3 and H4. In Pongo abelii (Sumatran orangutan), this protein is Transcriptional adapter 3 (TADA3).